A 351-amino-acid polypeptide reads, in one-letter code: Histidinol-phosphate aminotransferase 2 (351 aa).

Lys-210 carries the post-translational modification N6-(pyridoxal phosphate)lysine.

This sequence belongs to the class-II pyridoxal-phosphate-dependent aminotransferase family. Histidinol-phosphate aminotransferase subfamily. As to quaternary structure, homodimer. The cofactor is pyridoxal 5'-phosphate.

The enzyme catalyses L-histidinol phosphate + 2-oxoglutarate = 3-(imidazol-4-yl)-2-oxopropyl phosphate + L-glutamate. It participates in amino-acid biosynthesis; L-histidine biosynthesis; L-histidine from 5-phospho-alpha-D-ribose 1-diphosphate: step 7/9. This chain is Histidinol-phosphate aminotransferase 2 (hisC2), found in Rhizobium meliloti (strain 1021) (Ensifer meliloti).